The sequence spans 246 residues: Carboxy-S-adenosyl-L-methionine synthase (246 aa).

S-adenosyl-L-methionine contacts are provided by residues Tyr-39, 64–66 (GCS), 89–90 (DN), 117–118 (DI), Asn-132, and Arg-199.

It belongs to the class I-like SAM-binding methyltransferase superfamily. Cx-SAM synthase family. In terms of assembly, homodimer.

It carries out the reaction prephenate + S-adenosyl-L-methionine = carboxy-S-adenosyl-L-methionine + 3-phenylpyruvate + H2O. In terms of biological role, catalyzes the conversion of S-adenosyl-L-methionine (SAM) to carboxy-S-adenosyl-L-methionine (Cx-SAM). This is Carboxy-S-adenosyl-L-methionine synthase from Enterobacter sp. (strain 638).